Consider the following 316-residue polypeptide: tRNA dimethylallyltransferase (316 aa).

17–24 (GPTASGKT) contributes to the ATP binding site. 19-24 (TASGKT) is a substrate binding site. Interaction with substrate tRNA regions lie at residues 42–45 (DSAL), 166–170 (QRLSR), and 247–252 (RCVGYR).

Belongs to the IPP transferase family. Monomer. The cofactor is Mg(2+).

The catalysed reaction is adenosine(37) in tRNA + dimethylallyl diphosphate = N(6)-dimethylallyladenosine(37) in tRNA + diphosphate. Its function is as follows. Catalyzes the transfer of a dimethylallyl group onto the adenine at position 37 in tRNAs that read codons beginning with uridine, leading to the formation of N6-(dimethylallyl)adenosine (i(6)A). In Salmonella typhi, this protein is tRNA dimethylallyltransferase.